Reading from the N-terminus, the 185-residue chain is Peptide deformylase (185 aa).

Positions 109 and 152 each coordinate Fe cation. The active site involves Glu153. Residue His156 coordinates Fe cation.

This sequence belongs to the polypeptide deformylase family. Requires Fe(2+) as cofactor.

It catalyses the reaction N-terminal N-formyl-L-methionyl-[peptide] + H2O = N-terminal L-methionyl-[peptide] + formate. In terms of biological role, removes the formyl group from the N-terminal Met of newly synthesized proteins. Requires at least a dipeptide for an efficient rate of reaction. N-terminal L-methionine is a prerequisite for activity but the enzyme has broad specificity at other positions. The chain is Peptide deformylase from Roseiflexus castenholzii (strain DSM 13941 / HLO8).